The chain runs to 451 residues: MTENEQIFWNRVLELAQSQLKQATYEFFVHDARLLKVDKHIATIYLDQMKELFWEKNLKDVILTAGFEVYNAQISVDYVFEEDLMIEQNQTKINQKPKQQALNSLPTVTSDLNSKYSFENFIQGDENRWAVAASIAVANTPGTTYNPLFIWGGPGLGKTHLLNAIGNSVLLENPNARIKYITAENFINEFVIHIRLDTMDELKEKFRNLDLLLIDDIQSLAKKTLSGTQEEFFNTFNALHNNNKQIVLTSDRTPDHLNDLEDRLVTRFKWGLTVNITPPDFETRVAILTNKIQEYNFIFPQDTIEYLAGQFDSNVRDLEGALKDISLGANFKQIDTITVDIAAEAIRARKQDGPKMTVIPIEEIQAQGGKFYGVTGKEIKATKRTQNIVLARQVAMFLAREMTDNSLPKIGKEFGGRDHSTVLHAYNKIKNMISQDESLRIEIETIKNKIK.

The segment at 1–77 (MTENEQIFWN…EVYNAQISVD (77 aa)) is domain I, interacts with DnaA modulators. The tract at residues 77–110 (DYVFEEDLMIEQNQTKINQKPKQQALNSLPTVTS) is domain II. Residues 111–329 (DLNSKYSFEN…GALKDISLGA (219 aa)) are domain III, AAA+ region. ATP is bound by residues Gly-155, Gly-157, Lys-158, and Thr-159. The domain IV, binds dsDNA stretch occupies residues 330 to 451 (NFKQIDTITV…EIETIKNKIK (122 aa)).

This sequence belongs to the DnaA family. In terms of assembly, oligomerizes as a right-handed, spiral filament on DNA at oriC.

It localises to the cytoplasm. Plays an essential role in the initiation and regulation of chromosomal replication. ATP-DnaA binds to the origin of replication (oriC) to initiate formation of the DNA replication initiation complex once per cell cycle. Binds the DnaA box (a 9 base pair repeat at the origin) and separates the double-stranded (ds)DNA. Forms a right-handed helical filament on oriC DNA; dsDNA binds to the exterior of the filament while single-stranded (ss)DNA is stabiized in the filament's interior. The ATP-DnaA-oriC complex binds and stabilizes one strand of the AT-rich DNA unwinding element (DUE), permitting loading of DNA polymerase. After initiation quickly degrades to an ADP-DnaA complex that is not apt for DNA replication. Binds acidic phospholipids. This Streptococcus pyogenes serotype M49 (strain NZ131) protein is Chromosomal replication initiator protein DnaA.